The following is a 236-amino-acid chain: Protein N-lysine methyltransferase METTL21A (236 aa).

S-adenosyl-L-methionine is bound by residues Trp47, 73–75 (GAG), Asp112, Trp143, and Ala161.

Belongs to the methyltransferase superfamily. METTL21 family. As to quaternary structure, interacts with heat shock 70 family members; at least some of these proteins are methylation substrates.

It localises to the cytoplasm. The enzyme catalyses L-lysyl-[protein] + 3 S-adenosyl-L-methionine = N(6),N(6),N(6)-trimethyl-L-lysyl-[protein] + 3 S-adenosyl-L-homocysteine + 3 H(+). Its function is as follows. Protein-lysine methyltransferase that selectively trimethylates residues in heat shock protein 70 (HSP70) family members. Contributes to the in vivo trimethylation of Lys residues in HSPA1 and HSPA8. In vitro methylates 'Lys-561' in HSPA1, 'Lys-564' in HSPA2, 'Lys-585' in HSPA5, 'Lys-563' in HSPA6 and 'Lys-561' in HSPA8. This is Protein N-lysine methyltransferase METTL21A (METTL21A) from Pongo abelii (Sumatran orangutan).